The chain runs to 122 residues: Large ribosomal subunit protein uL14 (122 aa).

This sequence belongs to the universal ribosomal protein uL14 family. In terms of assembly, part of the 50S ribosomal subunit. Forms a cluster with proteins L3 and L19. In the 70S ribosome, L14 and L19 interact and together make contacts with the 16S rRNA in bridges B5 and B8.

Functionally, binds to 23S rRNA. Forms part of two intersubunit bridges in the 70S ribosome. This chain is Large ribosomal subunit protein uL14, found in Magnetococcus marinus (strain ATCC BAA-1437 / JCM 17883 / MC-1).